We begin with the raw amino-acid sequence, 158 residues long: MSEKYIVTWDMLQIHTRKLANRLVKKIHSWNGIIAVSRGGLVPSALLARELGLRCVDTVCIESYNYDCLKENRKIIKKAEGNGEKIIVIDDLVDTGGTAKIIRKLYPKACFVTIFAKPMGRSLVDNYIIDIPQNVWIEQPWDMSISYIPPLIQNYKIK.

Residues 38-39 (RG) and 90-98 (DDLVDTGGT) contribute to the 5-phospho-alpha-D-ribose 1-diphosphate site. D91 contributes to the Mg(2+) binding site. Guanine is bound by residues D94 and I137. 2 residues coordinate xanthine: D94 and I137. Residues 94–98 (DTGGT) and 136–137 (WI) contribute to the GMP site.

Belongs to the purine/pyrimidine phosphoribosyltransferase family. XGPT subfamily. As to quaternary structure, homotetramer. Mg(2+) is required as a cofactor.

The protein resides in the cell inner membrane. It carries out the reaction GMP + diphosphate = guanine + 5-phospho-alpha-D-ribose 1-diphosphate. The catalysed reaction is XMP + diphosphate = xanthine + 5-phospho-alpha-D-ribose 1-diphosphate. The enzyme catalyses IMP + diphosphate = hypoxanthine + 5-phospho-alpha-D-ribose 1-diphosphate. It functions in the pathway purine metabolism; GMP biosynthesis via salvage pathway; GMP from guanine: step 1/1. The protein operates within purine metabolism; XMP biosynthesis via salvage pathway; XMP from xanthine: step 1/1. Purine salvage pathway enzyme that catalyzes the transfer of the ribosyl-5-phosphate group from 5-phospho-alpha-D-ribose 1-diphosphate (PRPP) to the N9 position of the 6-oxopurines guanine and xanthine to form the corresponding ribonucleotides GMP (guanosine 5'-monophosphate) and XMP (xanthosine 5'-monophosphate), with the release of PPi. To a lesser extent, also acts on hypoxanthine. This chain is Xanthine-guanine phosphoribosyltransferase, found in Buchnera aphidicola subsp. Acyrthosiphon pisum (strain APS) (Acyrthosiphon pisum symbiotic bacterium).